A 192-amino-acid polypeptide reads, in one-letter code: Ion-translocating oxidoreductase complex subunit B (192 aa).

The segment at Met1 to Ser26 is hydrophobic. A 4Fe-4S domain is found at Gln32 to Val91. [4Fe-4S] cluster-binding residues include Cys49, Cys52, Cys57, Cys74, Cys117, Cys120, Cys123, Cys127, Cys147, Cys150, Cys153, and Cys157. 4Fe-4S ferredoxin-type domains follow at residues Met108–Arg137 and Ala138–Val167.

This sequence belongs to the 4Fe4S bacterial-type ferredoxin family. RnfB subfamily. The complex is composed of six subunits: RnfA, RnfB, RnfC, RnfD, RnfE and RnfG. It depends on [4Fe-4S] cluster as a cofactor.

The protein resides in the cell inner membrane. In terms of biological role, part of a membrane-bound complex that couples electron transfer with translocation of ions across the membrane. In Klebsiella pneumoniae (strain 342), this protein is Ion-translocating oxidoreductase complex subunit B.